A 234-amino-acid chain; its full sequence is tRNA (guanine-N(1)-)-methyltransferase (234 aa).

Residues G112 and 132–137 (IGDFIL) each bind S-adenosyl-L-methionine.

Belongs to the RNA methyltransferase TrmD family. In terms of assembly, homodimer.

The protein localises to the cytoplasm. It catalyses the reaction guanosine(37) in tRNA + S-adenosyl-L-methionine = N(1)-methylguanosine(37) in tRNA + S-adenosyl-L-homocysteine + H(+). Specifically methylates guanosine-37 in various tRNAs. This chain is tRNA (guanine-N(1)-)-methyltransferase, found in Campylobacter jejuni subsp. jejuni serotype O:6 (strain 81116 / NCTC 11828).